The chain runs to 255 residues: Octanoyltransferase (255 aa).

A disordered region spans residues 1 to 27 (MPPASDAHAAPDAAASTSASPQSCAAP). One can recognise a BPL/LPL catalytic domain in the interval 59–240 (PDTGDEIWVV…RLIANLDGAT (182 aa)). Substrate-binding positions include 99–106 (RGGQITYH), 171–173 (ALG), and 184–186 (GLS). Residue Cys-202 is the Acyl-thioester intermediate of the active site.

This sequence belongs to the LipB family.

The protein resides in the cytoplasm. The enzyme catalyses octanoyl-[ACP] + L-lysyl-[protein] = N(6)-octanoyl-L-lysyl-[protein] + holo-[ACP] + H(+). It participates in protein modification; protein lipoylation via endogenous pathway; protein N(6)-(lipoyl)lysine from octanoyl-[acyl-carrier-protein]: step 1/2. Functionally, catalyzes the transfer of endogenously produced octanoic acid from octanoyl-acyl-carrier-protein onto the lipoyl domains of lipoate-dependent enzymes. Lipoyl-ACP can also act as a substrate although octanoyl-ACP is likely to be the physiological substrate. The protein is Octanoyltransferase of Burkholderia thailandensis (strain ATCC 700388 / DSM 13276 / CCUG 48851 / CIP 106301 / E264).